The chain runs to 71 residues: UPF0346 protein BCQ_2236 (71 aa).

It belongs to the UPF0346 family.

The chain is UPF0346 protein BCQ_2236 from Bacillus cereus (strain Q1).